The chain runs to 221 residues: Cytidylate kinase 1 (221 aa).

7-15 serves as a coordination point for ATP; that stretch reads GPSASGKSS.

The protein belongs to the cytidylate kinase family. Type 1 subfamily.

It localises to the cytoplasm. The enzyme catalyses CMP + ATP = CDP + ADP. It carries out the reaction dCMP + ATP = dCDP + ADP. This chain is Cytidylate kinase 1, found in Borrelia garinii subsp. bavariensis (strain ATCC BAA-2496 / DSM 23469 / PBi) (Borreliella bavariensis).